The primary structure comprises 61 residues: Large ribosomal subunit protein uL30 (61 aa).

The protein belongs to the universal ribosomal protein uL30 family. In terms of assembly, part of the 50S ribosomal subunit.

This chain is Large ribosomal subunit protein uL30, found in Mycolicibacterium gilvum (strain PYR-GCK) (Mycobacterium gilvum (strain PYR-GCK)).